Consider the following 68-residue polypeptide: Conotoxin Mr3.3 (68 aa).

An N-terminal signal peptide occupies residues 1–19 (MSRLGVLLTICLLLFPLTA). A propeptide spanning residues 20-51 (VPLDGDQPADRPAERLQDDISSEHHPHFDSGR) is cleaved from the precursor. The segment at 22-46 (LDGDQPADRPAERLQDDISSEHHPH) is disordered. A compositionally biased stretch (basic and acidic residues) spans 27–46 (PADRPAERLQDDISSEHHPH). Disulfide bonds link C53–C67, C54–C63, and C59–C66. A 4-hydroxyproline modification is found at P65.

Belongs to the conotoxin M superfamily. Expressed by the venom duct.

It is found in the secreted. This Conus marmoreus (Marble cone) protein is Conotoxin Mr3.3.